The following is a 785-amino-acid chain: Endonuclease MutS2 (785 aa).

Residue 335-342 (GPNTGGKT) participates in ATP binding. Residues 710-785 (LDLRGERYED…GNGVTIVEFK (76 aa)) enclose the Smr domain.

Belongs to the DNA mismatch repair MutS family. MutS2 subfamily. Homodimer. Binds to stalled ribosomes, contacting rRNA.

Its function is as follows. Endonuclease that is involved in the suppression of homologous recombination and thus may have a key role in the control of bacterial genetic diversity. Acts as a ribosome collision sensor, splitting the ribosome into its 2 subunits. Detects stalled/collided 70S ribosomes which it binds and splits by an ATP-hydrolysis driven conformational change. Acts upstream of the ribosome quality control system (RQC), a ribosome-associated complex that mediates the extraction of incompletely synthesized nascent chains from stalled ribosomes and their subsequent degradation. Probably generates substrates for RQC. The chain is Endonuclease MutS2 from Listeria welshimeri serovar 6b (strain ATCC 35897 / DSM 20650 / CCUG 15529 / CIP 8149 / NCTC 11857 / SLCC 5334 / V8).